Here is a 264-residue protein sequence, read N- to C-terminus: Hemin import ATP-binding protein HmuV (264 aa).

An ABC transporter domain is found at 2 to 242 (IEAVNICVQR…QNLSDAYHCS (241 aa)). 34 to 41 (GPNGSGKS) is an ATP binding site.

It belongs to the ABC transporter superfamily. Heme (hemin) importer (TC 3.A.1.14.5) family. As to quaternary structure, the complex is composed of two ATP-binding proteins (HmuV), two transmembrane proteins (HmuU) and a solute-binding protein (HmuT).

It localises to the cell inner membrane. Functionally, part of the ABC transporter complex HmuTUV involved in hemin import. Responsible for energy coupling to the transport system. This Bartonella quintana (strain Toulouse) (Rochalimaea quintana) protein is Hemin import ATP-binding protein HmuV.